The chain runs to 48 residues: Putative ATP synthase protein 8-like protein (48 aa).

Residues 17–37 form a helical membrane-spanning segment; the sequence is GFLVILLTLLLLSYAFLSMIL.

The protein belongs to the ATPase protein 8 family.

It localises to the membrane. This chain is Putative ATP synthase protein 8-like protein, found in Eremothecium gossypii (strain ATCC 10895 / CBS 109.51 / FGSC 9923 / NRRL Y-1056) (Yeast).